We begin with the raw amino-acid sequence, 294 residues long: tRNA dimethylallyltransferase (294 aa).

10–17 (GPTAVGKT) lines the ATP pocket. 12–17 (TAVGKT) is a substrate binding site. The interval 35 to 38 (DSQQ) is interaction with substrate tRNA.

Belongs to the IPP transferase family. In terms of assembly, monomer. The cofactor is Mg(2+).

It catalyses the reaction adenosine(37) in tRNA + dimethylallyl diphosphate = N(6)-dimethylallyladenosine(37) in tRNA + diphosphate. In terms of biological role, catalyzes the transfer of a dimethylallyl group onto the adenine at position 37 in tRNAs that read codons beginning with uridine, leading to the formation of N6-(dimethylallyl)adenosine (i(6)A). This Streptococcus pneumoniae (strain Taiwan19F-14) protein is tRNA dimethylallyltransferase.